We begin with the raw amino-acid sequence, 249 residues long: Deoxyribose-phosphate aldolase (249 aa).

The active-site Proton donor/acceptor is the Asp-105. Lys-168 (schiff-base intermediate with acetaldehyde) is an active-site residue. Lys-216 (proton donor/acceptor) is an active-site residue.

This sequence belongs to the DeoC/FbaB aldolase family. DeoC type 1 subfamily.

The protein localises to the cytoplasm. The enzyme catalyses 2-deoxy-D-ribose 5-phosphate = D-glyceraldehyde 3-phosphate + acetaldehyde. Its pathway is carbohydrate degradation; 2-deoxy-D-ribose 1-phosphate degradation; D-glyceraldehyde 3-phosphate and acetaldehyde from 2-deoxy-alpha-D-ribose 1-phosphate: step 2/2. In terms of biological role, catalyzes a reversible aldol reaction between acetaldehyde and D-glyceraldehyde 3-phosphate to generate 2-deoxy-D-ribose 5-phosphate. The chain is Deoxyribose-phosphate aldolase from Corynebacterium jeikeium (strain K411).